The chain runs to 316 residues: Acetyl-coenzyme A carboxylase carboxyl transferase subunit beta (316 aa).

The CoA carboxyltransferase N-terminal domain maps to 39–308 (LWHKCSKCGV…TPPMVLWETM (270 aa)). Positions 43, 46, 62, and 65 each coordinate Zn(2+). The C4-type zinc finger occupies 43 to 65 (CSKCGVLTYTKDLRANQMVCVEC).

It belongs to the AccD/PCCB family. In terms of assembly, acetyl-CoA carboxylase is a heterohexamer composed of biotin carboxyl carrier protein (AccB), biotin carboxylase (AccC) and two subunits each of ACCase subunit alpha (AccA) and ACCase subunit beta (AccD). It depends on Zn(2+) as a cofactor.

It is found in the cytoplasm. The enzyme catalyses N(6)-carboxybiotinyl-L-lysyl-[protein] + acetyl-CoA = N(6)-biotinyl-L-lysyl-[protein] + malonyl-CoA. It participates in lipid metabolism; malonyl-CoA biosynthesis; malonyl-CoA from acetyl-CoA: step 1/1. In terms of biological role, component of the acetyl coenzyme A carboxylase (ACC) complex. Biotin carboxylase (BC) catalyzes the carboxylation of biotin on its carrier protein (BCCP) and then the CO(2) group is transferred by the transcarboxylase to acetyl-CoA to form malonyl-CoA. This Nostoc sp. (strain PCC 7120 / SAG 25.82 / UTEX 2576) protein is Acetyl-coenzyme A carboxylase carboxyl transferase subunit beta.